Reading from the N-terminus, the 206-residue chain is Large ribosomal subunit protein uL4 (206 aa).

Residues 45 to 75 are disordered; it reads RQGTHSTKTRGEVRGGGRKPWRQKGTGRARQ. The segment covering 60 to 71 has biased composition (basic residues); it reads GGRKPWRQKGTG.

The protein belongs to the universal ribosomal protein uL4 family. Part of the 50S ribosomal subunit.

In terms of biological role, one of the primary rRNA binding proteins, this protein initially binds near the 5'-end of the 23S rRNA. It is important during the early stages of 50S assembly. It makes multiple contacts with different domains of the 23S rRNA in the assembled 50S subunit and ribosome. Functionally, forms part of the polypeptide exit tunnel. This Thermoanaerobacter pseudethanolicus (strain ATCC 33223 / 39E) (Clostridium thermohydrosulfuricum) protein is Large ribosomal subunit protein uL4.